Here is a 198-residue protein sequence, read N- to C-terminus: ATP-dependent Clp protease proteolytic subunit (198 aa).

The Nucleophile role is filled by S98. H123 is an active-site residue.

Belongs to the peptidase S14 family. As to quaternary structure, fourteen ClpP subunits assemble into 2 heptameric rings which stack back to back to give a disk-like structure with a central cavity, resembling the structure of eukaryotic proteasomes.

It localises to the cytoplasm. It catalyses the reaction Hydrolysis of proteins to small peptides in the presence of ATP and magnesium. alpha-casein is the usual test substrate. In the absence of ATP, only oligopeptides shorter than five residues are hydrolyzed (such as succinyl-Leu-Tyr-|-NHMec, and Leu-Tyr-Leu-|-Tyr-Trp, in which cleavage of the -Tyr-|-Leu- and -Tyr-|-Trp bonds also occurs).. Functionally, cleaves peptides in various proteins in a process that requires ATP hydrolysis. Has a chymotrypsin-like activity. Plays a major role in the degradation of misfolded proteins. This is ATP-dependent Clp protease proteolytic subunit from Ehrlichia ruminantium (strain Gardel).